The following is a 159-amino-acid chain: Neuroglobin (159 aa).

Positions 3 to 151 (KLSEKDKGLI…VVSAMTRGWA (149 aa)) constitute a Globin domain. Heme b contacts are provided by His-66 and His-98.

Belongs to the globin family. Monomer. Homodimers and homotetramers. Mainly monomeric but also detected as part of homodimers and homotetramers. In terms of tissue distribution, detected in brain, eye and gill, but not in muscle and blood (at protein level). Particularly high expression in the periventral zone of tectum opticum, with significant expression detected in white matter, preglomerular nucleus, posterior tubular nucleus, torus longitudinalis, hypothalamus, pituitary gland, posterior tuberculum, hypothalamus, synencephalon and formatio reticularis. Detected also in brain regions of the visual system, predominantly in parts of tectum opticum and torus semicircularis, area dorsalis telencephali and medulla oblongata. Strong expression observed in sensory epithelium of peripheral olfactory organ, and outer and inner nuclear layers and ganglion cell layer of retina.

It localises to the cytoplasm. It is found in the cytosol. The protein localises to the mitochondrion matrix. It carries out the reaction Fe(III)-heme b-[protein] + nitric oxide + H2O = Fe(II)-heme b-[protein] + nitrite + 2 H(+). Its function is as follows. Monomeric globin with a bis-histidyl six-coordinate heme-iron atom through which it can bind dioxygen, carbon monoxide and nitric oxide. Could help transport oxygen and increase its availability to the metabolically active neuronal tissues, though its low quantity in tissues as well as its high affinity for dioxygen, which may limit its oxygen-releasing ability, argue against it. The ferrous/deoxygenated form exhibits a nitrite reductase activity and it could produce nitric oxide which in turn inhibits cellular respiration in response to hypoxia. In its ferrous/deoxygenated state, it may also exhibit GDI (Guanine nucleotide Dissociation Inhibitor) activity toward heterotrimeric G-alpha proteins, thereby regulating signal transduction to facilitate neuroprotective responses in the wake of hypoxia and associated oxidative stress. This Danio rerio (Zebrafish) protein is Neuroglobin (ngb).